Here is a 201-residue protein sequence, read N- to C-terminus: MAEPGFFNAMLIGALIFGYVLGSIPFGLILTRLAGLGDVRAIGSGNIGATNVLRTGNKKLAAATLILDALKGTAAALIAAHFGQNAAIAAGFGAFIGHLFPVWIGFKGGKGVATYLGVLIGLAWAGALVFAAAWIVTALLARYSSLSALVASLVVPIALYSRGNQALAALFAIMTVIVFIKHRANISRLLNGTESKIGAKG.

5 helical membrane-spanning segments follow: residues 10-30 (MLIG…GLIL), 60-80 (LAAA…LIAA), 86-106 (AAIA…WIGF), 116-136 (LGVL…AWIV), and 166-186 (ALAA…RANI).

This sequence belongs to the PlsY family. As to quaternary structure, probably interacts with PlsX.

The protein localises to the cell inner membrane. The catalysed reaction is an acyl phosphate + sn-glycerol 3-phosphate = a 1-acyl-sn-glycero-3-phosphate + phosphate. The protein operates within lipid metabolism; phospholipid metabolism. In terms of biological role, catalyzes the transfer of an acyl group from acyl-phosphate (acyl-PO(4)) to glycerol-3-phosphate (G3P) to form lysophosphatidic acid (LPA). This enzyme utilizes acyl-phosphate as fatty acyl donor, but not acyl-CoA or acyl-ACP. The chain is Glycerol-3-phosphate acyltransferase from Brucella melitensis biotype 2 (strain ATCC 23457).